The following is a 757-amino-acid chain: 5-methyltetrahydropteroyltriglutamate--homocysteine methyltransferase (757 aa).

Residues 17–20 (RELK) and Lys117 each bind 5-methyltetrahydropteroyltri-L-glutamate. Residues 432–434 (IGS) and Glu485 each bind L-homocysteine. L-methionine is bound by residues 432 to 434 (IGS) and Glu485. 5-methyltetrahydropteroyltri-L-glutamate-binding positions include 516 to 517 (RC) and Trp562. Asp600 contributes to the L-homocysteine binding site. Asp600 lines the L-methionine pocket. Glu606 contacts 5-methyltetrahydropteroyltri-L-glutamate. The Zn(2+) site is built by His642, Cys644, and Glu666. The active-site Proton donor is His695. Cys727 contributes to the Zn(2+) binding site.

The protein belongs to the vitamin-B12 independent methionine synthase family. It depends on Zn(2+) as a cofactor.

It carries out the reaction 5-methyltetrahydropteroyltri-L-glutamate + L-homocysteine = tetrahydropteroyltri-L-glutamate + L-methionine. The protein operates within amino-acid biosynthesis; L-methionine biosynthesis via de novo pathway; L-methionine from L-homocysteine (MetE route): step 1/1. In terms of biological role, catalyzes the transfer of a methyl group from 5-methyltetrahydrofolate to homocysteine resulting in methionine formation. The chain is 5-methyltetrahydropteroyltriglutamate--homocysteine methyltransferase from Erwinia tasmaniensis (strain DSM 17950 / CFBP 7177 / CIP 109463 / NCPPB 4357 / Et1/99).